The following is a 126-amino-acid chain: UPF0332 protein glr0978 (126 aa).

It belongs to the UPF0332 family.

The polypeptide is UPF0332 protein glr0978 (Gloeobacter violaceus (strain ATCC 29082 / PCC 7421)).